A 398-amino-acid chain; its full sequence is Dual-specificity RNA methyltransferase RlmN (398 aa).

Catalysis depends on Glu119, which acts as the Proton acceptor. In terms of domain architecture, Radical SAM core spans 125-364; the sequence is EADRATLCVS…TIVRKTRGDD (240 aa). Residues Cys132 and Cys369 are joined by a disulfide bond. [4Fe-4S] cluster contacts are provided by Cys139, Cys143, and Cys146. Residues 193-194, Ser225, 247-249, and Asn326 contribute to the S-adenosyl-L-methionine site; these read GE and SLH. Catalysis depends on Cys369, which acts as the S-methylcysteine intermediate.

The protein belongs to the radical SAM superfamily. RlmN family. The cofactor is [4Fe-4S] cluster.

The protein localises to the cytoplasm. The enzyme catalyses adenosine(2503) in 23S rRNA + 2 reduced [2Fe-2S]-[ferredoxin] + 2 S-adenosyl-L-methionine = 2-methyladenosine(2503) in 23S rRNA + 5'-deoxyadenosine + L-methionine + 2 oxidized [2Fe-2S]-[ferredoxin] + S-adenosyl-L-homocysteine. It carries out the reaction adenosine(37) in tRNA + 2 reduced [2Fe-2S]-[ferredoxin] + 2 S-adenosyl-L-methionine = 2-methyladenosine(37) in tRNA + 5'-deoxyadenosine + L-methionine + 2 oxidized [2Fe-2S]-[ferredoxin] + S-adenosyl-L-homocysteine. Specifically methylates position 2 of adenine 2503 in 23S rRNA and position 2 of adenine 37 in tRNAs. m2A2503 modification seems to play a crucial role in the proofreading step occurring at the peptidyl transferase center and thus would serve to optimize ribosomal fidelity. The sequence is that of Dual-specificity RNA methyltransferase RlmN from Yersinia pestis.